A 450-amino-acid chain; its full sequence is tRNA-2-methylthio-N(6)-dimethylallyladenosine synthase (450 aa).

The MTTase N-terminal domain occupies 7–127 (KRLYIKTYGC…LPELIARAHR (121 aa)). The [4Fe-4S] cluster site is built by C16, C52, C90, C165, C169, and C172. Residues 151–378 (QVSGVSAFLT…NQLLDEQQKA (228 aa)) form the Radical SAM core domain. The region spanning 381 to 443 (ILQVGKTMPV…KMSLGGVLET (63 aa)) is the TRAM domain.

Belongs to the methylthiotransferase family. MiaB subfamily. In terms of assembly, monomer. It depends on [4Fe-4S] cluster as a cofactor.

The protein resides in the cytoplasm. The catalysed reaction is N(6)-dimethylallyladenosine(37) in tRNA + (sulfur carrier)-SH + AH2 + 2 S-adenosyl-L-methionine = 2-methylsulfanyl-N(6)-dimethylallyladenosine(37) in tRNA + (sulfur carrier)-H + 5'-deoxyadenosine + L-methionine + A + S-adenosyl-L-homocysteine + 2 H(+). In terms of biological role, catalyzes the methylthiolation of N6-(dimethylallyl)adenosine (i(6)A), leading to the formation of 2-methylthio-N6-(dimethylallyl)adenosine (ms(2)i(6)A) at position 37 in tRNAs that read codons beginning with uridine. The polypeptide is tRNA-2-methylthio-N(6)-dimethylallyladenosine synthase (Caulobacter sp. (strain K31)).